A 531-amino-acid chain; its full sequence is Bifunctional protein TrpGD (531 aa).

The Glutamine amidotransferase type-1 domain occupies 3-196 (DILLLDNIDS…LAWAQQKLEP (194 aa)). Residue 57–59 (GPG) participates in L-glutamine binding. Cys-84 (nucleophile; for GATase activity) is an active-site residue. Residues Gln-88 and 134 to 135 (SL) each bind L-glutamine. Active-site for GATase activity residues include His-170 and Glu-172. An anthranilate phosphoribosyltransferase region spans residues 202–531 (PILEKLYQAQ…DRVTALAARG (330 aa)).

This sequence in the C-terminal section; belongs to the anthranilate phosphoribosyltransferase family. Monomer. Heterotetramer consisting of two non-identical subunits: a beta subunit (TrpG) and a large alpha subunit (TrpE).

The enzyme catalyses chorismate + L-glutamine = anthranilate + pyruvate + L-glutamate + H(+). It carries out the reaction N-(5-phospho-beta-D-ribosyl)anthranilate + diphosphate = 5-phospho-alpha-D-ribose 1-diphosphate + anthranilate. It functions in the pathway amino-acid biosynthesis; L-tryptophan biosynthesis; L-tryptophan from chorismate: step 1/5. It participates in amino-acid biosynthesis; L-tryptophan biosynthesis; L-tryptophan from chorismate: step 2/5. Cooperatively feedback inhibited by tryptophan. In terms of biological role, part of a heterotetrameric complex that catalyzes the two-step biosynthesis of anthranilate, an intermediate in the biosynthesis of L-tryptophan. In the first step, the glutamine-binding beta subunit (TrpG) of anthranilate synthase (AS) provides the glutamine amidotransferase activity which generates ammonia as a substrate that, along with chorismate, is used in the second step, catalyzed by the large alpha subunit of AS (TrpE) to produce anthranilate. In the absence of TrpG, TrpE can synthesize anthranilate directly from chorismate and high concentrations of ammonia. In addition to synthesizing anthranilate, it also catalyzes the second step of the pathway, the transfer of the phosphoribosyl group of 5-phosphorylribose-1-pyrophosphate (PRPP) to anthranilate. The polypeptide is Bifunctional protein TrpGD (trpGD) (Salmonella typhimurium (strain LT2 / SGSC1412 / ATCC 700720)).